A 621-amino-acid chain; its full sequence is Chaperone protein HtpG (621 aa).

The a; substrate-binding stretch occupies residues 1–341 (MSNQEYTFQT…SEDLPLNVSR (341 aa)). Positions 342 to 547 (EILQQNKILA…GDEQNAMMAN (206 aa)) are b. A c region spans residues 548–621 (WMRQMGQSVP…RLNSVLLKAL (74 aa)).

Belongs to the heat shock protein 90 family. In terms of assembly, homodimer.

The protein localises to the cytoplasm. Its function is as follows. Molecular chaperone. Has ATPase activity. This chain is Chaperone protein HtpG, found in Helicobacter pylori (strain ATCC 700392 / 26695) (Campylobacter pylori).